Reading from the N-terminus, the 450-residue chain is Dol-P-Glc:Glc(2)Man(9)GlcNAc(2)-PP-Dol alpha-1,2-glucosyltransferase (450 aa).

A helical membrane pass occupies residues 12–32 (ISIISKYVAIVIFLIFVIIMF). An N-linked (GlcNAc...) asparagine glycan is attached at Asn34. The next 4 membrane-spanning stretches (helical) occupy residues 158-178 (YFLFYTDVSSTILIILSLGLI), 190-210 (ALVGFMSLWFRQTNIIWIAFI), 243-263 (LLGYIVNIILFVIFLKLNGGI), and 273-293 (IELHIVQVFYCFTFITFFTIP). An N-linked (GlcNAc...) asparagine glycan is attached at Asn297. The next 4 helical transmembrane spans lie at 312 to 332 (IILNLVIGLIIWYIMENFTIV), 357 to 377 (LKPLILMAYHFSSFQIISSLI), 384 to 404 (FIGIFSYLIAVGLTLIPSPLF), and 429 to 449 (FIWLNSINLITSYIFLHKGII).

Belongs to the ALG10 glucosyltransferase family.

It is found in the endoplasmic reticulum membrane. It catalyses the reaction an alpha-D-Glc-(1-&gt;3)-alpha-D-Glc-(1-&gt;3)-alpha-D-Man-(1-&gt;2)-alpha-D-Man-(1-&gt;2)-alpha-D-Man-(1-&gt;3)-[alpha-D-Man-(1-&gt;2)-alpha-D-Man-(1-&gt;3)-[alpha-D-Man-(1-&gt;2)-alpha-D-Man-(1-&gt;6)]-alpha-D-Man-(1-&gt;6)]-beta-D-Man-(1-&gt;4)-beta-D-GlcNAc-(1-&gt;4)-alpha-D-GlcNAc-diphospho-di-trans,poly-cis-dolichol + a di-trans,poly-cis-dolichyl beta-D-glucosyl phosphate = a alpha-D-Glc-(1-&gt;2)-alpha-D-Glc-(1-&gt;3)-alpha-D-Glc-(1-&gt;3)-alpha-D-Man-(1-&gt;2)-alpha-D-Man-(1-&gt;2)-alpha-D-Man-(1-&gt;3)-[alpha-D-Man-(1-&gt;2)-alpha-D-Man-(1-&gt;3)-[alpha-D-Man-(1-&gt;2)-alpha-D-Man-(1-&gt;6)]-alpha-D-Man-(1-&gt;6)]-beta-D-Man-(1-&gt;4)-beta-D-GlcNAc-(1-&gt;4)-alpha-D-GlcNAc-diphospho-di-trans,poly-cis-dolichol + a di-trans,poly-cis-dolichyl phosphate + H(+). It functions in the pathway protein modification; protein glycosylation. In terms of biological role, dol-P-Glc:Glc(2)Man(9)GlcNAc(2)-PP-Dol alpha-1,2-glucosyltransferase that operates in the biosynthetic pathway of dolichol-linked oligosaccharides, the glycan precursors employed in protein asparagine (N)-glycosylation. The assembly of dolichol-linked oligosaccharides begins on the cytosolic side of the endoplasmic reticulum membrane and finishes in its lumen. The sequential addition of sugars to dolichol pyrophosphate produces dolichol-linked oligosaccharides containing fourteen sugars, including two GlcNAcs, nine mannoses and three glucoses. Once assembled, the oligosaccharide is transferred from the lipid to nascent proteins by oligosaccharyltransferases. In the lumen of the endoplasmic reticulum, adds the third and last glucose residue from dolichyl phosphate glucose (Dol-P-Glc) onto the lipid-linked oligosaccharide intermediate Glc(2)Man(9)GlcNAc(2)-PP-Dol to produce Glc(3)Man(9)GlcNAc(2)-PP-Dol. The protein is Dol-P-Glc:Glc(2)Man(9)GlcNAc(2)-PP-Dol alpha-1,2-glucosyltransferase (DIE2) of Candida albicans (strain SC5314 / ATCC MYA-2876) (Yeast).